Here is a 560-residue protein sequence, read N- to C-terminus: MSTSVFNRRWATLLLESLTRHGVRHVCIAPGSRSTPLTLSAADNHALICHTHFDERGLGHLALGLAKASREPVAIIVTSGTAAANLYPAIIEAGLTGERLVVLTADRPPELIDCGANQAIRQHALYASHPTLALDLPRPTPDIPASWLVSSVDSAMARLAHGALHINCPFAEPLYGADDGTAYQDWLIALGDWWSSREPWLREMRQSALAEQPDWPQWRQKRGVVLVGRVSPEQGARLAAWANELGWPLIGDVLSQSGQPLPCADIWLAHPDAADRLRQAEIVLQFGGSLTGKRLLQWQEQCQPQEFWLIDDLPGRLDPAHHRGRRLVADVGEWLSAHPAHKQAPWADMLVDIADKTQRQIDTHLASRFGEAQLAQRIPALLPPDGQLFVGNSLVVRLIDALAQLPQGYPVYGNRGASGIDGLISTLAGVQRATAKPMLGIVGDLSALYDLNALALLRQAPAPLVLIVVNNNGGQIFSLLPTPVAQRETFYCMPQNVEFGHAAAMFGLNYVRADNWEQLANTVTDCWAQGGVTLLEVVVEPKDGAATLNELVAQVATWAH.

The protein belongs to the TPP enzyme family. MenD subfamily. Homodimer. Mg(2+) is required as a cofactor. Requires Mn(2+) as cofactor. Thiamine diphosphate serves as cofactor.

The catalysed reaction is isochorismate + 2-oxoglutarate + H(+) = 5-enolpyruvoyl-6-hydroxy-2-succinyl-cyclohex-3-ene-1-carboxylate + CO2. The protein operates within quinol/quinone metabolism; 1,4-dihydroxy-2-naphthoate biosynthesis; 1,4-dihydroxy-2-naphthoate from chorismate: step 2/7. Its pathway is quinol/quinone metabolism; menaquinone biosynthesis. In terms of biological role, catalyzes the thiamine diphosphate-dependent decarboxylation of 2-oxoglutarate and the subsequent addition of the resulting succinic semialdehyde-thiamine pyrophosphate anion to isochorismate to yield 2-succinyl-5-enolpyruvyl-6-hydroxy-3-cyclohexene-1-carboxylate (SEPHCHC). This is 2-succinyl-5-enolpyruvyl-6-hydroxy-3-cyclohexene-1-carboxylate synthase from Pectobacterium carotovorum subsp. carotovorum (strain PC1).